Consider the following 856-residue polypeptide: MNVIDTDDLEKHTPMMRQYLTMKAEHHDMLLFYRMGDFYELFYDDAKRASELLGISLTARGKSGGDPIPMAGLPYHAVEGYLAKLVQIGQSVAICEQIGDPATSKGPVERKVVRIVTPGTLTDEALLQERQDNLLAAVYQGKIGFGYATLDVSSGRFVIAELDTRESLEAELQRTNPVEILYSEDFGELGLLNGFKGKRRRPEWEFDYDTSIKLLLAQFGTKDLHGFGIADARLSLQAAGCLMQYVKDTQRTALPHINAITRFNQTDSIVLDAATRRNLELTQNLAGGRDNTLAAVLDNTATPMGSRMLQRWIHQPLRDPKHIKARQQAVTELLDTAAHEGLHEQLKALGDIERIMARLALRTARPRDFARLRQALGLLPELQQSLSTLSAPHTTQLRQHLGEFPAEQALLERAIVDNPPMLIRDGGVIREGYNSELDEWRGLSEGASDYLVQLEAREKERTGINTLKVGYNRVHGYYIEVSRLQSSQVPLNYQRRQTLKNMERYITPELKEYEEKVLSSQGKALALEKQLWEQLFDLILPKLHELQAFARAAAELDVLSNFAERAETLGYTCPELSQDIGVQIEAGRHPVVERVSQTPFIANPVTLHNQRRMLIVTGPNMGGKSTYMRQVALITLMAHIGCFVPADCALIGPIDRIFTRIGASDDLASGRSTFMVEMTETANILHNATASSLVLMDEIGRGTSTYDGLSLAWSAAEYLAQQVGAMTLFATHYFELTQLPELMAGVYNVHLDAIEHDDTIAFMHAVQEGAASKSYGLQVAALAGVPNKVIKAAKHKLQQLESRDHQAEGTRTPIQSLLALPEPVENPALTKLSSINPDNLTPKQALDLLYELKRLS.

An ATP-binding site is contributed by 618–625 (GPNMGGKS).

It belongs to the DNA mismatch repair MutS family.

In terms of biological role, this protein is involved in the repair of mismatches in DNA. It is possible that it carries out the mismatch recognition step. This protein has a weak ATPase activity. This is DNA mismatch repair protein MutS from Shewanella baltica (strain OS223).